A 465-amino-acid chain; its full sequence is L-seryl-tRNA(Sec) selenium transferase (465 aa).

An N6-(pyridoxal phosphate)lysine modification is found at Lys-294.

It belongs to the SelA family. Requires pyridoxal 5'-phosphate as cofactor.

The protein localises to the cytoplasm. It catalyses the reaction L-seryl-tRNA(Sec) + selenophosphate + H(+) = L-selenocysteinyl-tRNA(Sec) + phosphate. Its pathway is aminoacyl-tRNA biosynthesis; selenocysteinyl-tRNA(Sec) biosynthesis; selenocysteinyl-tRNA(Sec) from L-seryl-tRNA(Sec) (bacterial route): step 1/1. Its function is as follows. Converts seryl-tRNA(Sec) to selenocysteinyl-tRNA(Sec) required for selenoprotein biosynthesis. This chain is L-seryl-tRNA(Sec) selenium transferase, found in Mannheimia succiniciproducens (strain KCTC 0769BP / MBEL55E).